The primary structure comprises 350 residues: 3-dehydroquinate synthase (350 aa).

NAD(+)-binding positions include 106 to 110 (GVVGD), 130 to 131 (TS), Lys-143, and Lys-152. 3 residues coordinate Zn(2+): Glu-185, His-246, and His-263.

The protein belongs to the sugar phosphate cyclases superfamily. Dehydroquinate synthase family. The cofactor is NAD(+). It depends on Co(2+) as a cofactor. Requires Zn(2+) as cofactor.

It is found in the cytoplasm. The enzyme catalyses 7-phospho-2-dehydro-3-deoxy-D-arabino-heptonate = 3-dehydroquinate + phosphate. It functions in the pathway metabolic intermediate biosynthesis; chorismate biosynthesis; chorismate from D-erythrose 4-phosphate and phosphoenolpyruvate: step 2/7. In terms of biological role, catalyzes the conversion of 3-deoxy-D-arabino-heptulosonate 7-phosphate (DAHP) to dehydroquinate (DHQ). This is 3-dehydroquinate synthase from Clostridium perfringens (strain 13 / Type A).